We begin with the raw amino-acid sequence, 383 residues long: Acetylornithine deacetylase (383 aa).

Histidine 80 is a Zn(2+) binding site. Aspartate 82 is a catalytic residue. Zn(2+) is bound at residue aspartate 112. The active site involves glutamate 144. Zn(2+) contacts are provided by glutamate 145, glutamate 169, and histidine 355.

This sequence belongs to the peptidase M20A family. ArgE subfamily. In terms of assembly, homodimer. Zn(2+) serves as cofactor. It depends on Co(2+) as a cofactor. The cofactor is glutathione.

The protein resides in the cytoplasm. It carries out the reaction N(2)-acetyl-L-ornithine + H2O = L-ornithine + acetate. Its pathway is amino-acid biosynthesis; L-arginine biosynthesis; L-ornithine from N(2)-acetyl-L-ornithine (linear): step 1/1. Its function is as follows. Catalyzes the hydrolysis of the amide bond of N(2)-acetylated L-amino acids. Cleaves the acetyl group from N-acetyl-L-ornithine to form L-ornithine, an intermediate in L-arginine biosynthesis pathway, and a branchpoint in the synthesis of polyamines. This chain is Acetylornithine deacetylase, found in Escherichia coli O45:K1 (strain S88 / ExPEC).